A 115-amino-acid polypeptide reads, in one-letter code: Mediator of RNA polymerase II transcription subunit 22 (115 aa).

Belongs to the Mediator complex subunit 22 family. In terms of assembly, component of the Mediator complex.

Its subcellular location is the nucleus. Its function is as follows. Component of the Mediator complex, a coactivator involved in the regulated transcription of nearly all RNA polymerase II-dependent genes. Mediator functions as a bridge to convey information from gene-specific regulatory proteins to the basal RNA polymerase II transcription machinery. Mediator is recruited to promoters by direct interactions with regulatory proteins and serves as a scaffold for the assembly of a functional preinitiation complex with RNA polymerase II and the general transcription factors. This Candida albicans (strain SC5314 / ATCC MYA-2876) (Yeast) protein is Mediator of RNA polymerase II transcription subunit 22 (SRB6).